A 307-amino-acid chain; its full sequence is Ornithine carbamoyltransferase (307 aa).

Residues 50 to 53 (STRT), Gln-77, Arg-101, and 128 to 131 (HPCQ) each bind carbamoyl phosphate. Residues Asn-160, Asp-224, and 228 to 229 (SM) each bind L-ornithine. Residues 264–265 (CL) and Arg-292 contribute to the carbamoyl phosphate site.

This sequence belongs to the aspartate/ornithine carbamoyltransferase superfamily. OTCase family.

The protein localises to the cytoplasm. It carries out the reaction carbamoyl phosphate + L-ornithine = L-citrulline + phosphate + H(+). The protein operates within amino-acid biosynthesis; L-arginine biosynthesis; L-arginine from L-ornithine and carbamoyl phosphate: step 1/3. Its activity is regulated as follows. Inhibited by arginine, norvaline. Reversibly catalyzes the transfer of the carbamoyl group from carbamoyl phosphate (CP) to the N(epsilon) atom of ornithine (ORN) to produce L-citrulline, which is a substrate for argininosuccinate synthetase, the enzyme involved in the final step in arginine biosynthesis. In Mycolicibacterium smegmatis (strain ATCC 700084 / mc(2)155) (Mycobacterium smegmatis), this protein is Ornithine carbamoyltransferase.